The chain runs to 318 residues: Pantothenate kinase (318 aa).

96-103 (GSVAVGKS) is an ATP binding site.

It belongs to the prokaryotic pantothenate kinase family.

The protein localises to the cytoplasm. It catalyses the reaction (R)-pantothenate + ATP = (R)-4'-phosphopantothenate + ADP + H(+). It functions in the pathway cofactor biosynthesis; coenzyme A biosynthesis; CoA from (R)-pantothenate: step 1/5. This chain is Pantothenate kinase, found in Nitrobacter hamburgensis (strain DSM 10229 / NCIMB 13809 / X14).